The following is a 249-amino-acid chain: 1-(5-phosphoribosyl)-5-[(5-phosphoribosylamino)methylideneamino] imidazole-4-carboxamide isomerase (249 aa).

D8 functions as the Proton acceptor in the catalytic mechanism. D130 acts as the Proton donor in catalysis.

Belongs to the HisA/HisF family.

Its subcellular location is the cytoplasm. The catalysed reaction is 1-(5-phospho-beta-D-ribosyl)-5-[(5-phospho-beta-D-ribosylamino)methylideneamino]imidazole-4-carboxamide = 5-[(5-phospho-1-deoxy-D-ribulos-1-ylimino)methylamino]-1-(5-phospho-beta-D-ribosyl)imidazole-4-carboxamide. It participates in amino-acid biosynthesis; L-histidine biosynthesis; L-histidine from 5-phospho-alpha-D-ribose 1-diphosphate: step 4/9. This chain is 1-(5-phosphoribosyl)-5-[(5-phosphoribosylamino)methylideneamino] imidazole-4-carboxamide isomerase, found in Nitrosococcus oceani (strain ATCC 19707 / BCRC 17464 / JCM 30415 / NCIMB 11848 / C-107).